A 147-amino-acid chain; its full sequence is SsrA-binding protein (147 aa).

It belongs to the SmpB family.

The protein resides in the cytoplasm. In terms of biological role, required for rescue of stalled ribosomes mediated by trans-translation. Binds to transfer-messenger RNA (tmRNA), required for stable association of tmRNA with ribosomes. tmRNA and SmpB together mimic tRNA shape, replacing the anticodon stem-loop with SmpB. tmRNA is encoded by the ssrA gene; the 2 termini fold to resemble tRNA(Ala) and it encodes a 'tag peptide', a short internal open reading frame. During trans-translation Ala-aminoacylated tmRNA acts like a tRNA, entering the A-site of stalled ribosomes, displacing the stalled mRNA. The ribosome then switches to translate the ORF on the tmRNA; the nascent peptide is terminated with the 'tag peptide' encoded by the tmRNA and targeted for degradation. The ribosome is freed to recommence translation, which seems to be the essential function of trans-translation. This chain is SsrA-binding protein, found in Mycoplasma pneumoniae (strain ATCC 29342 / M129 / Subtype 1) (Mycoplasmoides pneumoniae).